The primary structure comprises 682 residues: Probable glycosyl transferase Gly (682 aa).

UDP contacts are provided by residues 21–26 (CASFSD) and 112–113 (DC). Positions 112, 114, and 230 each coordinate Mn(2+). UDP is bound at residue 230-236 (HYLPERK).

It belongs to the glycosyltransferase 8 family. As to quaternary structure, part of the accessory SecA2/SecY2 protein translocation apparatus required to export cell wall protein GspB.

Functionally, part of the accessory SecA2/SecY2 system specifically required to export GspB, a serine-rich repeat cell wall protein encoded upstream in the same operon. In Streptococcus gordonii, this protein is Probable glycosyl transferase Gly (gly).